The primary structure comprises 187 residues: Ribosome-recycling factor (187 aa).

Belongs to the RRF family.

The protein localises to the cytoplasm. Responsible for the release of ribosomes from messenger RNA at the termination of protein biosynthesis. May increase the efficiency of translation by recycling ribosomes from one round of translation to another. In Orientia tsutsugamushi (strain Ikeda) (Rickettsia tsutsugamushi), this protein is Ribosome-recycling factor.